The sequence spans 305 residues: DNA-directed RNA polymerase 35 kDa subunit (305 aa).

This sequence belongs to the poxviridae DNA-directed RNA polymerase 35 kDa subunit family. The DNA-dependent RNA polymerase used for intermediate and late genes expression consists of eight subunits 147 kDa, 133 kDa, 35 kDa, 30 kDa, 22 kDa, 19 kDa, 18 kDa and 7 kDa totalling more than 500 kDa in mass. The same holoenzyme, with the addition of the transcription-specificity factor RAP94, is used for early gene expression.

The protein resides in the virion. The enzyme catalyses RNA(n) + a ribonucleoside 5'-triphosphate = RNA(n+1) + diphosphate. Functionally, part of the DNA-dependent RNA polymerase which catalyzes the transcription of viral DNA into RNA using the four ribonucleoside triphosphates as substrates. Responsible for the transcription of early, intermediate and late genes. DNA-dependent RNA polymerase associates with the early transcription factor (ETF), itself composed of D6 and A7, thereby allowing the early genes transcription. Late transcription, and probably also intermediate transcription, require newly synthesized RNA polymerase. The protein is DNA-directed RNA polymerase 35 kDa subunit (OPG156) of Cynomys gunnisoni (Gunnison's prairie dog).